The primary structure comprises 236 residues: 5'-methylthioadenosine/S-adenosylhomocysteine nucleosidase (236 aa).

The Proton acceptor role is filled by glutamate 12. Residues glycine 78, methionine 153, and 174 to 175 (ME) each bind substrate. Aspartate 198 (proton donor) is an active-site residue.

It belongs to the PNP/UDP phosphorylase family. MtnN subfamily.

It carries out the reaction S-adenosyl-L-homocysteine + H2O = S-(5-deoxy-D-ribos-5-yl)-L-homocysteine + adenine. The catalysed reaction is S-methyl-5'-thioadenosine + H2O = 5-(methylsulfanyl)-D-ribose + adenine. It catalyses the reaction 5'-deoxyadenosine + H2O = 5-deoxy-D-ribose + adenine. It participates in amino-acid biosynthesis; L-methionine biosynthesis via salvage pathway; S-methyl-5-thio-alpha-D-ribose 1-phosphate from S-methyl-5'-thioadenosine (hydrolase route): step 1/2. Catalyzes the irreversible cleavage of the glycosidic bond in both 5'-methylthioadenosine (MTA) and S-adenosylhomocysteine (SAH/AdoHcy) to adenine and the corresponding thioribose, 5'-methylthioribose and S-ribosylhomocysteine, respectively. Also cleaves 5'-deoxyadenosine, a toxic by-product of radical S-adenosylmethionine (SAM) enzymes, into 5-deoxyribose and adenine. In Geobacillus thermodenitrificans (strain NG80-2), this protein is 5'-methylthioadenosine/S-adenosylhomocysteine nucleosidase.